The sequence spans 129 residues: NADH-quinone oxidoreductase subunit A (129 aa).

3 consecutive transmembrane segments (helical) span residues Leu14–Trp34, Phe67–Ala87, and Trp95–Leu115.

It belongs to the complex I subunit 3 family. In terms of assembly, NDH-1 is composed of 14 different subunits. Subunits NuoA, H, J, K, L, M, N constitute the membrane sector of the complex.

It is found in the cell inner membrane. It carries out the reaction a quinone + NADH + 5 H(+)(in) = a quinol + NAD(+) + 4 H(+)(out). NDH-1 shuttles electrons from NADH, via FMN and iron-sulfur (Fe-S) centers, to quinones in the respiratory chain. The immediate electron acceptor for the enzyme in this species is believed to be ubiquinone. Couples the redox reaction to proton translocation (for every two electrons transferred, four hydrogen ions are translocated across the cytoplasmic membrane), and thus conserves the redox energy in a proton gradient. The polypeptide is NADH-quinone oxidoreductase subunit A (Rhodopseudomonas palustris (strain BisB5)).